The primary structure comprises 92 residues: Defensin-like protein 249 (92 aa).

An N-terminal signal peptide occupies residues 1 to 24; it reads MKLAAIFLASSVLLSLLPIHLSQG. Disulfide bonds link cysteine 34–cysteine 91, cysteine 45–cysteine 74, cysteine 53–cysteine 84, and cysteine 72–cysteine 86.

This sequence belongs to the DEFL family.

It localises to the secreted. This is Defensin-like protein 249 (SCRL7) from Arabidopsis thaliana (Mouse-ear cress).